Here is a 971-residue protein sequence, read N- to C-terminus: Protein ALWAYS EARLY 1 (971 aa).

Positions 1–11 (MAPTRKSKSVN) are enriched in basic residues. Disordered stretches follow at residues 1-40 (MAPT…LADK), 117-137 (SESE…LKRK), 197-260 (IEDF…MFEN), 326-371 (GLLE…GLED), and 421-507 (PKES…KISL). In terms of domain architecture, SANT spans 40–98 (KLGPQWTKRELVRFYDAYRKYVGDWKKVAAAVRNNRSVEMVETLFCMNRAYLSLPEGTA). Basic and acidic residues-rich tracts occupy residues 209 to 219 (KQLDADDDASR), 332 to 350 (SSPH…KKSN), and 424 to 440 (STQD…EVDS). Polar residues predominate over residues 450–470 (SSQGPAKQLKTAKTTVESSSA).

As to expression, expressed ubiquitously in vegetative and reproductive tissues.

It is found in the nucleus. The protein is Protein ALWAYS EARLY 1 (ALY1) of Arabidopsis thaliana (Mouse-ear cress).